Here is a 115-residue protein sequence, read N- to C-terminus: Nucleoid-associated protein Ccel_0243 (115 aa).

This sequence belongs to the YbaB/EbfC family. In terms of assembly, homodimer.

Its subcellular location is the cytoplasm. It localises to the nucleoid. In terms of biological role, binds to DNA and alters its conformation. May be involved in regulation of gene expression, nucleoid organization and DNA protection. In Ruminiclostridium cellulolyticum (strain ATCC 35319 / DSM 5812 / JCM 6584 / H10) (Clostridium cellulolyticum), this protein is Nucleoid-associated protein Ccel_0243.